Reading from the N-terminus, the 263-residue chain is Sulfur carrier protein FdhD (263 aa).

The active-site Cysteine persulfide intermediate is cysteine 107.

It belongs to the FdhD family.

The protein localises to the cytoplasm. In terms of biological role, required for formate dehydrogenase (FDH) activity. Acts as a sulfur carrier protein that transfers sulfur from IscS to the molybdenum cofactor prior to its insertion into FDH. This is Sulfur carrier protein FdhD from Bacillus licheniformis (strain ATCC 14580 / DSM 13 / JCM 2505 / CCUG 7422 / NBRC 12200 / NCIMB 9375 / NCTC 10341 / NRRL NRS-1264 / Gibson 46).